Here is a 260-residue protein sequence, read N- to C-terminus: Small ribosomal subunit protein eS1 (260 aa).

Residues Met-1–Lys-18 show a composition bias toward basic residues. Residues Met-1–Asp-22 form a disordered region.

Belongs to the eukaryotic ribosomal protein eS1 family. Component of the small ribosomal subunit. Mature ribosomes consist of a small (40S) and a large (60S) subunit. The 40S subunit contains about 33 different proteins and 1 molecule of RNA (18S). The 60S subunit contains about 49 different proteins and 3 molecules of RNA (25S, 5.8S and 5S).

The protein localises to the cytoplasm. The polypeptide is Small ribosomal subunit protein eS1 (Helianthus annuus (Common sunflower)).